A 485-amino-acid polypeptide reads, in one-letter code: Glycogen synthase (485 aa).

ADP-alpha-D-glucose is bound at residue Lys-15.

The protein belongs to the glycosyltransferase 1 family. Bacterial/plant glycogen synthase subfamily.

The enzyme catalyses [(1-&gt;4)-alpha-D-glucosyl](n) + ADP-alpha-D-glucose = [(1-&gt;4)-alpha-D-glucosyl](n+1) + ADP + H(+). Its pathway is glycan biosynthesis; glycogen biosynthesis. Functionally, synthesizes alpha-1,4-glucan chains using ADP-glucose. In Rhodospirillum rubrum (strain ATCC 11170 / ATH 1.1.1 / DSM 467 / LMG 4362 / NCIMB 8255 / S1), this protein is Glycogen synthase.